Here is a 340-residue protein sequence, read N- to C-terminus: Flavonoid 7-O-methyltransferase 2 (340 aa).

Asp-207 is a binding site for S-adenosyl-L-methionine. His-245 serves as the catalytic Proton acceptor.

The protein belongs to the class I-like SAM-binding methyltransferase superfamily. Cation-independent O-methyltransferase family. In terms of assembly, homodimer. As to expression, expressed in leaves.

It carries out the reaction scutellarein 4'-methyl ether + S-adenosyl-L-methionine = ladanein + S-adenosyl-L-homocysteine. The catalysed reaction is acacetin + S-adenosyl-L-methionine = apigenin 4',7-dimethyl ether + S-adenosyl-L-homocysteine. It catalyses the reaction diosmetin + S-adenosyl-L-methionine = luteolin 4',7-dimethyl ether + S-adenosyl-L-homocysteine. The enzyme catalyses chrysoeriol + S-adenosyl-L-methionine = velutin + S-adenosyl-L-homocysteine. It carries out the reaction (2S)-naringenin + S-adenosyl-L-methionine = (2S)-sakuranetin + S-adenosyl-L-homocysteine + H(+). The catalysed reaction is apigenin + S-adenosyl-L-methionine = genkwanin + S-adenosyl-L-homocysteine + H(+). It catalyses the reaction luteolin + S-adenosyl-L-methionine = luteolin 7-methyl ether + S-adenosyl-L-homocysteine + H(+). The enzyme catalyses scutellarein + S-adenosyl-L-methionine = scutellarein 7-methyl ether + S-adenosyl-L-homocysteine. The protein operates within flavonoid metabolism. In terms of biological role, flavonoid 7-O-methyltransferase involved in the biosynthesis of polymethoxylated flavonoids natural products such as nevadensin and salvigenin, aroma compounds which contribute to the flavor of sweet basil, and exhibit pharmacological activities such as anti-allergic, anti-oxidant, antibacterial, anti-proliferative, and anti-inflammatory effects. Catalyzes S-adenosylmethionine-dependent regioselective 7-O-methylation of flavonoids; active on various hydroxylated flavonoid substrates, including apigenin (API) and luteolin (LUT), and, with a lower efficiency, scutellarein (SCU), naringenin (NAR), chrysoeriol (CHRYS), diosmetin (DIOS), acacetin (ACA) and scutellarein-7-methyl ether (SCU7Me). The protein is Flavonoid 7-O-methyltransferase 2 of Ocimum basilicum (Sweet basil).